Here is a 199-residue protein sequence, read N- to C-terminus: GTP cyclohydrolase-2 (199 aa).

GTP is bound at residue R52 to E56. Positions 57, 68, and 70 each coordinate Zn(2+). GTP contacts are provided by residues Q73, E94–R96, and T116. D128 functions as the Proton acceptor in the catalytic mechanism. Catalysis depends on R130, which acts as the Nucleophile. 2 residues coordinate GTP: T151 and K156.

Belongs to the GTP cyclohydrolase II family. Zn(2+) serves as cofactor.

The catalysed reaction is GTP + 4 H2O = 2,5-diamino-6-hydroxy-4-(5-phosphoribosylamino)-pyrimidine + formate + 2 phosphate + 3 H(+). It participates in cofactor biosynthesis; riboflavin biosynthesis; 5-amino-6-(D-ribitylamino)uracil from GTP: step 1/4. Catalyzes the conversion of GTP to 2,5-diamino-6-ribosylamino-4(3H)-pyrimidinone 5'-phosphate (DARP), formate and pyrophosphate. In Aliivibrio fischeri (strain ATCC 700601 / ES114) (Vibrio fischeri), this protein is GTP cyclohydrolase-2.